We begin with the raw amino-acid sequence, 164 residues long: MNRAAIYPGSFDPLTNGHLAIIQRGLNLFDRLVVAVANNPQKSPMFTVDERKALIREAVGNDPRVEVDSFDGLMVDYARTRGIPKVLRGLRAVSDFEYEFQLANMNKKLLPEFESVFVMTGEDYFFVSARLVREVAQFGGNVEGLVPANVLEALQRKLGRPPRS.

S10 is a substrate binding site. Residues 10–11 and H18 contribute to the ATP site; that span reads SF. Positions 42, 74, and 88 each coordinate substrate. ATP contacts are provided by residues 89–91, E99, and 124–130; these read GLR and YFFVSAR.

The protein belongs to the bacterial CoaD family. In terms of assembly, homohexamer. Mg(2+) is required as a cofactor.

It is found in the cytoplasm. The catalysed reaction is (R)-4'-phosphopantetheine + ATP + H(+) = 3'-dephospho-CoA + diphosphate. It participates in cofactor biosynthesis; coenzyme A biosynthesis; CoA from (R)-pantothenate: step 4/5. In terms of biological role, reversibly transfers an adenylyl group from ATP to 4'-phosphopantetheine, yielding dephospho-CoA (dPCoA) and pyrophosphate. This is Phosphopantetheine adenylyltransferase from Anaeromyxobacter dehalogenans (strain 2CP-1 / ATCC BAA-258).